A 618-amino-acid chain; its full sequence is Glucose starvation modulator protein 1 (618 aa).

Residues 20–48 (CEFCHTKHIQCDVGRPCQNCLKRNIGKFC) constitute a DNA-binding region (zn(2)-C6 fungal-type). A disordered region spans residues 325–353 (ANANTQPSHNAKLESECDSSSHSDADLEK). Positions 335 to 353 (AKLESECDSSSHSDADLEK) are enriched in basic and acidic residues. Residues 466 to 538 (LLDLENMAKL…QIFNELLAFG (73 aa)) form the PAS domain.

It belongs to the ERT1/acuK family.

It localises to the nucleus. Its function is as follows. Transcription factor which regulates nonfermentable carbon utilization. Binds specifically to 5'-CGGN(8)CGG-3' and 5'-CGGN(9)CGG-3' sequences in the promoter region. The sequence is that of Glucose starvation modulator protein 1 (GSM1) from Saccharomyces cerevisiae (strain JAY291) (Baker's yeast).